A 438-amino-acid polypeptide reads, in one-letter code: Glyceraldehyde-3-phosphate dehydrogenase B, chloroplastic (438 aa).

The transit peptide at 1-53 directs the protein to the chloroplast; it reads CLSKKFEVAEFAGLRSSGCVTFSNKESSFFDVVSAQLTPKTTRSTPVKGETVA. Residues 64-65, D88, and R133 contribute to the NADP(+) site; that span reads RI. D-glyceraldehyde 3-phosphate contacts are provided by residues 207-209, T238, R253, 266-267, and R289; these read SCT and TG. The Nucleophile role is filled by C208. N372 provides a ligand contact to NADP(+).

The protein belongs to the glyceraldehyde-3-phosphate dehydrogenase family. In terms of assembly, tetramer of either four A chains (GAPDH 2) or two A and two B chains (GAPDH 1).

Its subcellular location is the plastid. The protein resides in the chloroplast. It catalyses the reaction D-glyceraldehyde 3-phosphate + phosphate + NADP(+) = (2R)-3-phospho-glyceroyl phosphate + NADPH + H(+). It functions in the pathway carbohydrate biosynthesis; Calvin cycle. This Nicotiana tabacum (Common tobacco) protein is Glyceraldehyde-3-phosphate dehydrogenase B, chloroplastic (GAPB).